The following is a 25-amino-acid chain: Ranatuerin-1 (25 aa).

Cys-19 and Cys-25 are joined by a disulfide.

It belongs to the frog skin active peptide (FSAP) family. Ranatuerin subfamily. Expressed by the skin glands.

The protein resides in the secreted. Antibacterial activity against Gram-positive bacterium S.aureus (MIC=50 uM) and Gram-negative bacterium E.coli (MIC=2 uM). Has activity against C.albicans (MIC=70 uM). Shows no detectable hemolytic activity towards human erythrocytes. In Aquarana catesbeiana (American bullfrog), this protein is Ranatuerin-1.